Here is a 235-residue protein sequence, read N- to C-terminus: MKLTWYGHSAFRIETGDAKILIDPYLIGNPSWTGGWEGPAEGITHVLLTHGHSDHISGALEVLGKSGAQLVANFEICMYLVGKGADGSKINPGNIGGTVDCGGFTTTFVQALHSSSFGEDGGKNVYLGNPGGLVLHFPEDRTLYHMGDTDIFSDMALINELHEPKIGIVPIGDRFTMGGAVAALACRRFFKFDTVVPCHFGTFPMIDPTPEKFEAGLEGSGVKVALPKIGETITI.

The protein belongs to the UPF0173 family.

The polypeptide is UPF0173 metal-dependent hydrolase mll0680 (Mesorhizobium japonicum (strain LMG 29417 / CECT 9101 / MAFF 303099) (Mesorhizobium loti (strain MAFF 303099))).